The sequence spans 110 residues: Ribonuclease P protein component (110 aa).

Belongs to the RnpA family. Consists of a catalytic RNA component (M1 or rnpB) and a protein subunit.

It carries out the reaction Endonucleolytic cleavage of RNA, removing 5'-extranucleotides from tRNA precursor.. Its function is as follows. RNaseP catalyzes the removal of the 5'-leader sequence from pre-tRNA to produce the mature 5'-terminus. It can also cleave other RNA substrates such as 4.5S RNA. The protein component plays an auxiliary but essential role in vivo by binding to the 5'-leader sequence and broadening the substrate specificity of the ribozyme. The protein is Ribonuclease P protein component of Mesorhizobium japonicum (strain LMG 29417 / CECT 9101 / MAFF 303099) (Mesorhizobium loti (strain MAFF 303099)).